A 436-amino-acid polypeptide reads, in one-letter code: MSRHFRTHTTSRLTFPSSSGGLAITRLPFSSTSSKLLLQQLSSTSPAAAATAVTITTSSPARNLQRARASAAEQGMEEHGKAAVGWAARDDSGVLSPYNFSRRAQKDDDVTIKVLYCGICHTDLHVVKNDWGNAMYPVVPGHEIVGVVTGVGAGVTKFKAGDTVGVGFFVGSCRTCDSCGKGYENYCPTMVITSNGKDYGGAATQGGFSDAIVVNEHYVLRVPAGLPLDGAAPLLCAGVTVYSPMVIHGLNAPGKHVGVVGLGGLGHVAVKFAKAFGMRVTVISTSPGKRREALEHLGADEFLVSRDAGQMAAAAGTMDGILNTVSAWHPVAPLFALMKPMAQMVFVGAPTRPLELPAYAIVPGGKGITGNCVGGIRDCQAMLDFAGEHGITAEVEVIKMDYVNTAMERLEKNDVRYRFVIDVAGSSLGGSGDDKI.

Zn(2+) is bound at residue C120. An NADP(+)-binding site is contributed by T122. Zn(2+)-binding residues include H142, E143, C173, C176, C179, C187, and C236. NADP(+) is bound by residues T240, 261–266 (GLGGLG), 284–289 (STSPGK), T324, G348, and 371–373 (NCV).

Belongs to the zinc-containing alcohol dehydrogenase family. As to quaternary structure, homodimer. Requires Zn(2+) as cofactor.

The enzyme catalyses (E)-cinnamyl alcohol + NADP(+) = (E)-cinnamaldehyde + NADPH + H(+). The catalysed reaction is (E)-coniferol + NADP(+) = (E)-coniferaldehyde + NADPH + H(+). It carries out the reaction (E)-sinapyl alcohol + NADP(+) = (E)-sinapaldehyde + NADPH + H(+). It catalyses the reaction (E)-4-coumaroyl alcohol + NADP(+) = (E)-4-coumaraldehyde + NADPH + H(+). The enzyme catalyses (E)-caffeyl alcohol + NADP(+) = (E)-caffeyl aldehyde + NADPH + H(+). The protein operates within aromatic compound metabolism; phenylpropanoid biosynthesis. In terms of biological role, involved in lignin biosynthesis. Catalyzes the final step specific for the production of lignin monomers. Catalyzes the NADPH-dependent reduction of coniferaldehyde, 5-hydroxyconiferaldehyde, sinapaldehyde, 4-coumaraldehyde and caffeyl aldehyde to their respective alcohols. In Oryza sativa subsp. japonica (Rice), this protein is Probable cinnamyl alcohol dehydrogenase 8B.